The sequence spans 109 residues: MAQFEWVHAAWLALAIVLEIVANVFLKFSDGFRRKIFGLLSLAAVLAAFSALSQAVKGIDLSVVYALWGGFGIAATLAAGWILFGQRLNRKGWIGLVLLLAGMIMVKLA.

The Periplasmic segment spans residues 1 to 5 (MAQFE). Residues 6–26 (WVHAAWLALAIVLEIVANVFL) form a helical membrane-spanning segment. Over 27-35 (KFSDGFRRK) the chain is Cytoplasmic. Residues 36–56 (IFGLLSLAAVLAAFSALSQAV) traverse the membrane as a helical segment. Over 57–63 (KGIDLSV) the chain is Periplasmic. The helical transmembrane segment at 64–84 (VYALWGGFGIAATLAAGWILF) threads the bilayer. Topologically, residues 85–87 (GQR) are cytoplasmic. Residues 88-108 (LNRKGWIGLVLLLAGMIMVKL) form a helical membrane-spanning segment. Ala-109 is a topological domain (periplasmic).

This sequence belongs to the drug/metabolite transporter (DMT) superfamily. Small multidrug resistance (SMR) (TC 2.A.7.1) family. MdtI subfamily. In terms of assembly, forms a complex with MdtJ.

Its subcellular location is the cell inner membrane. Its function is as follows. Catalyzes the excretion of spermidine. The polypeptide is Spermidine export protein MdtI (mdtI) (Shigella flexneri).